The chain runs to 290 residues: RIO-type serine/threonine-protein kinase Rio1 (290 aa).

In terms of domain architecture, Protein kinase spans 76–290; the sequence is TEYIGIVNSG…PIDEAMIKQL (215 aa). ATP contacts are provided by residues 82–90 and Lys103; that span reads VNSGKEAVV. Catalysis depends on Asp214, which acts as the Proton acceptor. The Mg(2+) site is built by Asn219 and Asp231. The active-site 4-aspartylphosphate intermediate is the Asp231.

This sequence belongs to the protein kinase superfamily. RIO-type Ser/Thr kinase family.

The enzyme catalyses L-seryl-[protein] + ATP = O-phospho-L-seryl-[protein] + ADP + H(+). The catalysed reaction is L-threonyl-[protein] + ATP = O-phospho-L-threonyl-[protein] + ADP + H(+). It carries out the reaction ATP + H2O = ADP + phosphate + H(+). Its function is as follows. Despite the protein kinase domain is proposed to act predominantly as an ATPase. The chain is RIO-type serine/threonine-protein kinase Rio1 (rio1) from Methanocaldococcus jannaschii (strain ATCC 43067 / DSM 2661 / JAL-1 / JCM 10045 / NBRC 100440) (Methanococcus jannaschii).